Here is a 423-residue protein sequence, read N- to C-terminus: Polyglutamylase complex subunit TTLL1 (423 aa).

The 367-residue stretch at 1–367 folds into the TTL domain; the sequence is MAGKVKWVTD…NGEIPDCKWN (367 aa). ATP is bound by residues K138, 144-145, 181-184, and 194-196; these read QG, SLYI, and KFD. A protein is bound at residue Q144. An L-glutamate-binding site is contributed by R220. 241 to 242 provides a ligand contact to ATP; that stretch reads TN. K259 provides a ligand contact to L-glutamate. Mg(2+) is bound by residues D313, E326, and N328. Residue K344 participates in L-glutamate binding. A disordered region spans residues 391-423; the sequence is GAERELRSRPGQSLGPKGSRLRDAGRTVLTTWK.

The protein belongs to the tubulin polyglutamylase family. Part of the neuronal tubulin polyglutamylase complex which contains TPGS1, TPGS2, TTLL1, LRRC49 and NICN1. Interacts with PCM1, CSTPP1 and LRRC49. It depends on Mg(2+) as a cofactor.

It localises to the cytoplasm. Its subcellular location is the cytoskeleton. It is found in the cilium basal body. The protein localises to the cilium axoneme. The protein resides in the cell projection. It localises to the cilium. Its subcellular location is the flagellum. The catalysed reaction is (L-glutamyl)(n)-gamma-L-glutamyl-L-glutamyl-[protein] + L-glutamate + ATP = (L-glutamyl)(n+1)-gamma-L-glutamyl-L-glutamyl-[protein] + ADP + phosphate + H(+). In terms of biological role, catalytic subunit of a polyglutamylase complex which modifies tubulin, generating side chains of glutamate on the gamma-carboxyl group of specific glutamate residues within the C-terminal tail of tubulin. Probably involved in the side-chain elongation step of the polyglutamylation reaction rather than the initiation step. Modifies both alpha- and beta-tubulins with a preference for the alpha-tail. Unlike most polyglutamylases of the tubulin--tyrosine ligase family, only displays a catalytic activity when in complex with other proteins as it is most likely lacking domains important for autonomous activity. Part of the neuronal tubulin polyglutamylase complex. Mediates cilia and flagella polyglutamylation which is essential for their biogenesis and motility. Involved in respiratory motile cilia function through the regulation of beating asymmetry. Essential for sperm flagella biogenesis, motility and male fertility. Involved in KLF4 glutamylation which impedes its ubiquitination, thereby leading to somatic cell reprogramming, pluripotency maintenance and embryogenesis. This chain is Polyglutamylase complex subunit TTLL1 (TTLL1), found in Bos taurus (Bovine).